Consider the following 368-residue polypeptide: tRNA-specific 2-thiouridylase MnmA (368 aa).

ATP contacts are provided by residues 14–21 and L40; that span reads AMSGGVDS. C108 acts as the Nucleophile in catalysis. The cysteines at positions 108 and 204 are disulfide-linked. Residue G132 participates in ATP binding. The tract at residues 154–156 is interaction with tRNA; that stretch reads KDQ. C204 (cysteine persulfide intermediate) is an active-site residue.

The protein belongs to the MnmA/TRMU family.

It localises to the cytoplasm. The catalysed reaction is S-sulfanyl-L-cysteinyl-[protein] + uridine(34) in tRNA + AH2 + ATP = 2-thiouridine(34) in tRNA + L-cysteinyl-[protein] + A + AMP + diphosphate + H(+). Its function is as follows. Catalyzes the 2-thiolation of uridine at the wobble position (U34) of tRNA, leading to the formation of s(2)U34. The sequence is that of tRNA-specific 2-thiouridylase MnmA from Rickettsia canadensis (strain McKiel).